Consider the following 349-residue polypeptide: Probable dual-specificity RNA methyltransferase RlmN (349 aa).

The active-site Proton acceptor is the Glu-94. A Radical SAM core domain is found at 100–334 (TETRTTACVS…VKVRRSRGKD (235 aa)). The cysteines at positions 107 and 339 are disulfide-linked. [4Fe-4S] cluster-binding residues include Cys-114, Cys-118, and Cys-121. Residues 165-166 (GE), Ser-197, 220-222 (SLH), and Asn-296 each bind S-adenosyl-L-methionine. Cys-339 (S-methylcysteine intermediate) is an active-site residue.

This sequence belongs to the radical SAM superfamily. RlmN family. Requires [4Fe-4S] cluster as cofactor.

The protein localises to the cytoplasm. It catalyses the reaction adenosine(2503) in 23S rRNA + 2 reduced [2Fe-2S]-[ferredoxin] + 2 S-adenosyl-L-methionine = 2-methyladenosine(2503) in 23S rRNA + 5'-deoxyadenosine + L-methionine + 2 oxidized [2Fe-2S]-[ferredoxin] + S-adenosyl-L-homocysteine. The enzyme catalyses adenosine(37) in tRNA + 2 reduced [2Fe-2S]-[ferredoxin] + 2 S-adenosyl-L-methionine = 2-methyladenosine(37) in tRNA + 5'-deoxyadenosine + L-methionine + 2 oxidized [2Fe-2S]-[ferredoxin] + S-adenosyl-L-homocysteine. Its function is as follows. Specifically methylates position 2 of adenine 2503 in 23S rRNA and position 2 of adenine 37 in tRNAs. The sequence is that of Probable dual-specificity RNA methyltransferase RlmN from Flavobacterium johnsoniae (strain ATCC 17061 / DSM 2064 / JCM 8514 / BCRC 14874 / CCUG 350202 / NBRC 14942 / NCIMB 11054 / UW101) (Cytophaga johnsonae).